The chain runs to 402 residues: Uroporphyrinogen decarboxylase 1, chloroplastic (402 aa).

The transit peptide at 1 to 50 (MISATATAAFLAAAPASSSSCTTHRRRSGLPAISASLATASSTEEPLLVR) directs the protein to the chloroplast. Residues 67-71 (RQAGR), Phe86, Ser116, Asp117, Tyr193, Ser248, and His363 each bind substrate.

Belongs to the uroporphyrinogen decarboxylase family. As to quaternary structure, homodimer.

Its subcellular location is the plastid. It is found in the chloroplast. The catalysed reaction is uroporphyrinogen III + 4 H(+) = coproporphyrinogen III + 4 CO2. It participates in porphyrin-containing compound metabolism; protoporphyrin-IX biosynthesis; coproporphyrinogen-III from 5-aminolevulinate: step 4/4. Its function is as follows. Catalyzes the decarboxylation of four acetate groups of uroporphyrinogen-III to yield coproporphyrinogen-III. This is Uroporphyrinogen decarboxylase 1, chloroplastic from Oryza sativa subsp. japonica (Rice).